The following is a 201-amino-acid chain: Small ribosomal subunit protein uS4 (201 aa).

One can recognise an S4 RNA-binding domain in the interval 91-157 (CRLDNVVYRA…TPFIIAKETI (67 aa)).

Belongs to the universal ribosomal protein uS4 family. Part of the 30S ribosomal subunit. Contacts protein S5. The interaction surface between S4 and S5 is involved in control of translational fidelity.

One of the primary rRNA binding proteins, it binds directly to 16S rRNA where it nucleates assembly of the body of the 30S subunit. Functionally, with S5 and S12 plays an important role in translational accuracy. The sequence is that of Small ribosomal subunit protein uS4 from Saccharopolyspora erythraea (strain ATCC 11635 / DSM 40517 / JCM 4748 / NBRC 13426 / NCIMB 8594 / NRRL 2338).